The chain runs to 571 residues: MRTSNYLLSTLKETPNDAEVVSHQLMLRAGMIRKLASGLYTWLPTGLRVLRKVENIVRQEIDNAGAVETLMPVVQPFELWEETGRSEKMGPELLRFTDRHVRPFVLSPTAEEVITSLVRNEVSSYKQLPLNLYQIQTKFRDERRPRFGVMRAREFCMMDAYSFDIDKAGLEKSYQAMHDAYCKAFDRMGLEYRPVLADSGAIGGSGSQEFHVLADSGEDLIAFSTESDYAANIEKAEALAPAVERAEPTQEMTLVDTPNAKTIAELVEQHGLPIEKTVKTLFVKASDEIDAPIIALIVRGDHELNEVKAENLPQVASPLEMASEEEIRELIGAGPGSLGPVGLELPFIVDRSVAVMSDFGAGANIDGKHYFGINWGRDVELGQVEDLRNVVEGDPSPCGKGTLMLKRGIEVGHIFQLGNVYSEAMNCSVLGPDGKNVILEMGCYGIGVSRVVASAIEQNHDKYGIIWPDAIAPFQVAIVPMNMHKSERVKEAAEKLYAELTAMGIEVLFDDRKERPGVMFSDIELIGIPHTIVIGDRSMDEGNFEYKNRRTGEKTPVAMADIVEHVKSQLK.

The protein belongs to the class-II aminoacyl-tRNA synthetase family. ProS type 1 subfamily. As to quaternary structure, homodimer.

Its subcellular location is the cytoplasm. The enzyme catalyses tRNA(Pro) + L-proline + ATP = L-prolyl-tRNA(Pro) + AMP + diphosphate. Catalyzes the attachment of proline to tRNA(Pro) in a two-step reaction: proline is first activated by ATP to form Pro-AMP and then transferred to the acceptor end of tRNA(Pro). As ProRS can inadvertently accommodate and process non-cognate amino acids such as alanine and cysteine, to avoid such errors it has two additional distinct editing activities against alanine. One activity is designated as 'pretransfer' editing and involves the tRNA(Pro)-independent hydrolysis of activated Ala-AMP. The other activity is designated 'posttransfer' editing and involves deacylation of mischarged Ala-tRNA(Pro). The misacylated Cys-tRNA(Pro) is not edited by ProRS. In Vibrio parahaemolyticus serotype O3:K6 (strain RIMD 2210633), this protein is Proline--tRNA ligase.